Consider the following 156-residue polypeptide: MQTTKNQDDLVRIFKAILKEERFGSQSEIVTALQAEGFTNINQSKVSRMLSKFGAVRTRNAKQEMVYCLPAELGVPTAGSPLKNLVLDVDHNQAMIVVRTSPGAAQLIARLLDSIGKPEGILGTIAGDDTIFICPSSIQDIADTLETIKSLFNYAE.

Belongs to the ArgR family.

The protein localises to the cytoplasm. The protein operates within amino-acid biosynthesis; L-arginine biosynthesis [regulation]. Its function is as follows. Regulates arginine biosynthesis genes. This is Arginine repressor from Shewanella oneidensis (strain ATCC 700550 / JCM 31522 / CIP 106686 / LMG 19005 / NCIMB 14063 / MR-1).